We begin with the raw amino-acid sequence, 274 residues long: Large ribosomal subunit protein uL2cz/uL2cy (274 aa).

Disordered stretches follow at residues 1 to 21 (MAIH…VDSQ) and 224 to 252 (NPVD…GYPA).

It belongs to the universal ribosomal protein uL2 family. As to quaternary structure, part of the 50S ribosomal subunit.

It localises to the plastid. Its subcellular location is the chloroplast. The polypeptide is Large ribosomal subunit protein uL2cz/uL2cy (rpl2-A) (Olimarabidopsis pumila (Dwarf rocket)).